The chain runs to 1345 residues: Aldehyde oxidase 2 (1345 aa).

One can recognise a 2Fe-2S ferredoxin-type domain in the interval 9 to 96 (DELEFFVNGK…GAAVTTVEGV (88 aa)). Cys48, Cys53, Cys56, and Cys78 together coordinate [2Fe-2S] cluster. A Mo-molybdopterin-binding site is contributed by Gln117. Positions 118, 121, 153, and 155 each coordinate [2Fe-2S] cluster. Cys155 provides a ligand contact to Mo-molybdopterin. The FAD-binding PCMH-type domain occupies 238 to 423 (FYGERITWIA…GSVYIPHSQK (186 aa)). FAD is bound by residues 266 to 273 (LISGNTAL), Ala347, Ser356, His360, Asp369, and Leu413. Residues 812–813 (GF), 1094–1097 (ASVG), Gln1209, and Leu1274 each bind Mo-molybdopterin. Glu1276 serves as the catalytic Proton acceptor; for azaheterocycle hydroxylase activity.

The protein belongs to the xanthine dehydrogenase family. In terms of assembly, homodimer. [2Fe-2S] cluster serves as cofactor. The cofactor is FAD. Mo-molybdopterin is required as a cofactor.

The protein localises to the cytoplasm. It carries out the reaction an aldehyde + O2 + H2O = a carboxylate + H2O2 + H(+). Functionally, oxidase with broad substrate specificity, oxidizing aromatic azaheterocycles, such as phthalazine, as well as aldehydes, such as benzaldehyde and retinal. The polypeptide is Aldehyde oxidase 2 (Aox2) (Rattus norvegicus (Rat)).